A 120-amino-acid polypeptide reads, in one-letter code: Large ribosomal subunit protein bL17 (120 aa).

Belongs to the bacterial ribosomal protein bL17 family. In terms of assembly, part of the 50S ribosomal subunit. Contacts protein L32.

The polypeptide is Large ribosomal subunit protein bL17 (Geobacillus thermodenitrificans (strain NG80-2)).